Consider the following 457-residue polypeptide: UDP-N-acetylmuramate--L-alanine ligase (457 aa).

Residue 118-124 (GTHGKTT) coordinates ATP.

The protein belongs to the MurCDEF family.

The protein localises to the cytoplasm. The catalysed reaction is UDP-N-acetyl-alpha-D-muramate + L-alanine + ATP = UDP-N-acetyl-alpha-D-muramoyl-L-alanine + ADP + phosphate + H(+). The protein operates within cell wall biogenesis; peptidoglycan biosynthesis. Its function is as follows. Cell wall formation. The polypeptide is UDP-N-acetylmuramate--L-alanine ligase (Clostridium perfringens (strain 13 / Type A)).